The following is a 218-amino-acid chain: Leucine-rich repeat protein 2 (218 aa).

An N-terminal signal peptide occupies residues 1 to 27; it reads MVAQNSRRELLAASLILTLALIRLTEA. 5 LRR repeats span residues 69–93, 94–117, 119–141, 142–165, and 167–190; these read HHQV…LGKL, EHLQ…LGNL, SLIS…LGKL, KSLV…LTVI, and SLKV…PFEH.

In terms of biological role, probably involved in plant defense response. The protein is Leucine-rich repeat protein 2 of Arabidopsis thaliana (Mouse-ear cress).